A 473-amino-acid polypeptide reads, in one-letter code: Photosystem II CP43 reaction center protein (473 aa).

The propeptide occupies 1–14; that stretch reads MKTLYSLRRFSHVE. Residue Thr-15 is modified to N-acetylthreonine. Position 15 is a phosphothreonine (Thr-15). Helical transmembrane passes span 69–93, 134–155, 178–200, 255–275, and 291–312; these read LFEV…PHLA, LLGP…KDRN, KALY…RKIT, KPFA…LSYS, and WFNN…ASQA. Residue Glu-367 coordinates [CaMn4O5] cluster. A helical membrane pass occupies residues 447 to 471; it reads RARAAAAGFEKGIDRDFEPVLSMTP.

This sequence belongs to the PsbB/PsbC family. PsbC subfamily. As to quaternary structure, PSII is composed of 1 copy each of membrane proteins PsbA, PsbB, PsbC, PsbD, PsbE, PsbF, PsbH, PsbI, PsbJ, PsbK, PsbL, PsbM, PsbT, PsbX, PsbY, PsbZ, Psb30/Ycf12, at least 3 peripheral proteins of the oxygen-evolving complex and a large number of cofactors. It forms dimeric complexes. Binds multiple chlorophylls and provides some of the ligands for the Ca-4Mn-5O cluster of the oxygen-evolving complex. It may also provide a ligand for a Cl- that is required for oxygen evolution. PSII binds additional chlorophylls, carotenoids and specific lipids. is required as a cofactor.

Its subcellular location is the plastid membrane. Its function is as follows. One of the components of the core complex of photosystem II (PSII). It binds chlorophyll and helps catalyze the primary light-induced photochemical processes of PSII. PSII is a light-driven water:plastoquinone oxidoreductase, using light energy to abstract electrons from H(2)O, generating O(2) and a proton gradient subsequently used for ATP formation. The sequence is that of Photosystem II CP43 reaction center protein from Cuscuta obtusiflora (Peruvian dodder).